Reading from the N-terminus, the 137-residue chain is uncharacterized protein (137 aa).

The next 4 helical transmembrane spans lie at 14–34, 48–68, 84–104, and 109–129; these read AVVVAILLYIFIILVVDGSIS, YHIIEFYDFIHIIGFLLSLSI, FFTIFFGITFILGITLFLGLT, and HIPSMRGYTTLMLFFFLLNLF.

Its subcellular location is the cell membrane. This is an uncharacterized protein from Methanocaldococcus jannaschii (strain ATCC 43067 / DSM 2661 / JAL-1 / JCM 10045 / NBRC 100440) (Methanococcus jannaschii).